Consider the following 490-residue polypeptide: Probable cytochrome P450 518B1 (490 aa).

A helical transmembrane segment spans residues 2 to 22; the sequence is LTNIIILIILYLFYDFCYKNF. Cysteine 437 serves as a coordination point for heme.

Belongs to the cytochrome P450 family. Heme is required as a cofactor.

The protein localises to the membrane. In Dictyostelium discoideum (Social amoeba), this protein is Probable cytochrome P450 518B1 (cyp518B1).